The chain runs to 680 residues: DNA-directed RNA polymerase subunit beta' (680 aa).

The Zn(2+) site is built by Cys-69, Cys-71, Cys-87, and Cys-90. Residues Asp-489, Asp-491, and Asp-493 each contribute to the Mg(2+) site.

The protein belongs to the RNA polymerase beta' chain family. RpoC1 subfamily. As to quaternary structure, in plastids the minimal PEP RNA polymerase catalytic core is composed of four subunits: alpha, beta, beta', and beta''. When a (nuclear-encoded) sigma factor is associated with the core the holoenzyme is formed, which can initiate transcription. Mg(2+) serves as cofactor. It depends on Zn(2+) as a cofactor.

It is found in the plastid. Its subcellular location is the chloroplast. It carries out the reaction RNA(n) + a ribonucleoside 5'-triphosphate = RNA(n+1) + diphosphate. DNA-dependent RNA polymerase catalyzes the transcription of DNA into RNA using the four ribonucleoside triphosphates as substrates. The chain is DNA-directed RNA polymerase subunit beta' from Barbarea verna (Land cress).